The primary structure comprises 506 residues: 2,3-bisphosphoglycerate-independent phosphoglycerate mutase (506 aa).

The Mn(2+) site is built by aspartate 13 and serine 63. Serine 63 acts as the Phosphoserine intermediate in catalysis. Residues histidine 124, 153 to 154 (RD), arginine 183, arginine 189, 255 to 258 (RADR), and lysine 331 contribute to the substrate site. Mn(2+) is bound by residues aspartate 397, histidine 401, aspartate 438, histidine 439, and histidine 457.

This sequence belongs to the BPG-independent phosphoglycerate mutase family. In terms of assembly, monomer. Mn(2+) is required as a cofactor.

The enzyme catalyses (2R)-2-phosphoglycerate = (2R)-3-phosphoglycerate. It functions in the pathway carbohydrate degradation; glycolysis; pyruvate from D-glyceraldehyde 3-phosphate: step 3/5. In terms of biological role, catalyzes the interconversion of 2-phosphoglycerate and 3-phosphoglycerate. The polypeptide is 2,3-bisphosphoglycerate-independent phosphoglycerate mutase (Ruegeria sp. (strain TM1040) (Silicibacter sp.)).